The chain runs to 523 residues: UPF0329 protein ECU02_0050 (523 aa).

The interval 326–386 (EEKAKSKKRG…KTGKKSEGGR (61 aa)) is disordered. A compositionally biased stretch (basic residues) spans 330-339 (KSKKRGKRKS). Basic and acidic residues predominate over residues 344–353 (EAKEEEKKES). Residues 354 to 368 (ETEEVEAGEEVEMPS) are compositionally biased toward acidic residues.

Belongs to the UPF0329 family.

The protein is UPF0329 protein ECU02_0050 of Encephalitozoon cuniculi (strain GB-M1) (Microsporidian parasite).